Here is a 197-residue protein sequence, read N- to C-terminus: Molybdenum cofactor guanylyltransferase (197 aa).

GTP contacts are provided by residues 10-12, Lys23, Asn51, Asp69, and Asp99; that span reads LAG. Asp99 provides a ligand contact to Mg(2+).

It belongs to the MobA family. As to quaternary structure, monomer. Mg(2+) is required as a cofactor.

It is found in the cytoplasm. The enzyme catalyses Mo-molybdopterin + GTP + H(+) = Mo-molybdopterin guanine dinucleotide + diphosphate. In terms of biological role, transfers a GMP moiety from GTP to Mo-molybdopterin (Mo-MPT) cofactor (Moco or molybdenum cofactor) to form Mo-molybdopterin guanine dinucleotide (Mo-MGD) cofactor. In Shewanella sp. (strain ANA-3), this protein is Molybdenum cofactor guanylyltransferase.